Consider the following 106-residue polypeptide: MNDSEFHQLADQLMLYIEETLDSFTGDSDIDYETNGGVMTLTFENGSKIVINRQEPLHQVWLATKAGGYHFNYRDGHWYCSRSGEEFLAKLSEAASAQAGENVSFG.

It belongs to the frataxin family.

Its function is as follows. Involved in iron-sulfur (Fe-S) cluster assembly. May act as a regulator of Fe-S biogenesis. The polypeptide is Iron-sulfur cluster assembly protein CyaY (Yersinia pestis bv. Antiqua (strain Antiqua)).